A 287-amino-acid chain; its full sequence is Very long chain fatty acid elongase 4 (287 aa).

Transmembrane regions (helical) follow at residues 33 to 53 (ILVY…EHIM), 64 to 84 (PFVV…YSCV), and 115 to 135 (FWVF…VFLV). Positions 145–149 (HWYHH) match the HxxHH motif motif. Catalysis depends on H148, which acts as the Nucleophile. 4 consecutive transmembrane segments (helical) span residues 150-170 (LTVA…GLWF), 172-192 (TMNY…ACGM), 199-219 (IAPF…LIVL), and 241-261 (LGLV…GKLY).

The protein belongs to the ELO family.

The protein localises to the membrane. It carries out the reaction a very-long-chain acyl-CoA + malonyl-CoA + H(+) = a very-long-chain 3-oxoacyl-CoA + CO2 + CoA. Its function is as follows. Involved in the synthesis of fatty acids. Elongates C16:0 and C18:0 fatty acids to C26:0, with C24:0 being the main product. This Trypanosoma cruzi (strain CL Brener) protein is Very long chain fatty acid elongase 4.